The following is a 1012-amino-acid chain: Putative cellulose synthase-like protein D5 (1012 aa).

Residues 1 to 85 (MSGDYANYTV…APSSNKSLLV (85 aa)) form a disordered region. Residues 20 to 37 (PSGGAPPAAPSAGGARPG) are compositionally biased toward low complexity. Over residues 57–69 (GGGDDGAKMDRRL) the composition is skewed to basic and acidic residues. A run of 2 helical transmembrane segments spans residues 150–170 (ILSP…LFLV) and 180–200 (ALWL…SWLL). Asp-280 is a catalytic residue. The disordered stretch occupies residues 597–620 (PRQGSEAMPGAGGGRSGGGSVGGD). Over residues 606-618 (GAGGGRSGGGSVG) the composition is skewed to gly residues. The active site involves Asp-717. 6 consecutive transmembrane segments (helical) span residues 799–819 (LFLI…QFIV), 825–845 (TFLS…LLEV), 871–891 (LAAV…SFTL), 914–934 (SLFI…VVGV), 948–968 (LLGG…FAKG), and 978–998 (TIVY…WITI).

The protein belongs to the glycosyltransferase 2 family. Plant cellulose synthase-like D subfamily.

It localises to the golgi apparatus membrane. Thought to be a Golgi-localized beta-glycan synthase that polymerize the backbones of noncellulosic polysaccharides (hemicelluloses) of plant cell wall. This is Putative cellulose synthase-like protein D5 (CSLD5) from Oryza sativa subsp. indica (Rice).